Consider the following 537-residue polypeptide: Aminopeptidase Y (537 aa).

Residues 1–21 (MHFSLKQLAVAAFYATNLGSA) form the signal peptide. Positions 22–56 (YVIPQFFQEAFQQEEPIENYLPQLNDDDSSAVAAN) are excised as a propeptide. N-linked (GlcNAc...) asparagine glycosylation is found at asparagine 85, asparagine 96, asparagine 115, asparagine 150, and asparagine 162. Residues histidine 314 and aspartate 326 each coordinate Zn(2+). Glutamate 358 serves as the catalytic Proton acceptor. Glutamate 359 serves as a coordination point for Zn(2+). Asparagine 371 is a glycosylation site (N-linked (GlcNAc...) asparagine). Residue aspartate 387 participates in Zn(2+) binding. Asparagine 427 carries an N-linked (GlcNAc...) asparagine glycan. Histidine 472 is a binding site for Zn(2+). The N-linked (GlcNAc...) asparagine glycan is linked to asparagine 480.

The protein belongs to the peptidase M28 family. M28A subfamily. In terms of assembly, monomer. Zn(2+) serves as cofactor.

The protein resides in the vacuole. It catalyses the reaction Preferentially, release of N-terminal lysine.. The sequence is that of Aminopeptidase Y (APE3) from Saccharomyces cerevisiae (strain ATCC 204508 / S288c) (Baker's yeast).